Consider the following 380-residue polypeptide: Probable tRNA sulfurtransferase (380 aa).

A THUMP domain is found at 58 to 162 (EEVIERLKKV…MAFVYAGVIE (105 aa)). Residues 178-179 (LL), 203-204 (YF), R260, G282, and Q291 each bind ATP.

This sequence belongs to the ThiI family.

It localises to the cytoplasm. It catalyses the reaction [ThiI sulfur-carrier protein]-S-sulfanyl-L-cysteine + a uridine in tRNA + 2 reduced [2Fe-2S]-[ferredoxin] + ATP + H(+) = [ThiI sulfur-carrier protein]-L-cysteine + a 4-thiouridine in tRNA + 2 oxidized [2Fe-2S]-[ferredoxin] + AMP + diphosphate. It carries out the reaction [ThiS sulfur-carrier protein]-C-terminal Gly-Gly-AMP + S-sulfanyl-L-cysteinyl-[cysteine desulfurase] + AH2 = [ThiS sulfur-carrier protein]-C-terminal-Gly-aminoethanethioate + L-cysteinyl-[cysteine desulfurase] + A + AMP + 2 H(+). It participates in cofactor biosynthesis; thiamine diphosphate biosynthesis. In terms of biological role, catalyzes the ATP-dependent transfer of a sulfur to tRNA to produce 4-thiouridine in position 8 of tRNAs, which functions as a near-UV photosensor. Also catalyzes the transfer of sulfur to the sulfur carrier protein ThiS, forming ThiS-thiocarboxylate. This is a step in the synthesis of thiazole, in the thiamine biosynthesis pathway. The sulfur is donated as persulfide by IscS. The chain is Probable tRNA sulfurtransferase from Thermoanaerobacter pseudethanolicus (strain ATCC 33223 / 39E) (Clostridium thermohydrosulfuricum).